Here is a 429-residue protein sequence, read N- to C-terminus: Enolase (429 aa).

Gln162 provides a ligand contact to (2R)-2-phosphoglycerate. Catalysis depends on Glu204, which acts as the Proton donor. Residues Asp241, Glu283, and Asp310 each coordinate Mg(2+). (2R)-2-phosphoglycerate contacts are provided by Lys335, Arg364, Ser365, and Lys386. The active-site Proton acceptor is Lys335.

This sequence belongs to the enolase family. Mg(2+) serves as cofactor.

It is found in the cytoplasm. The protein localises to the secreted. The protein resides in the cell surface. It catalyses the reaction (2R)-2-phosphoglycerate = phosphoenolpyruvate + H2O. It participates in carbohydrate degradation; glycolysis; pyruvate from D-glyceraldehyde 3-phosphate: step 4/5. Functionally, catalyzes the reversible conversion of 2-phosphoglycerate (2-PG) into phosphoenolpyruvate (PEP). It is essential for the degradation of carbohydrates via glycolysis. This is Enolase from Mycolicibacterium gilvum (strain PYR-GCK) (Mycobacterium gilvum (strain PYR-GCK)).